The following is a 564-amino-acid chain: Dihydroxy-acid dehydratase (564 aa).

Position 53 (Cys53) interacts with [2Fe-2S] cluster. Asp85 is a Mg(2+) binding site. Residue Cys126 participates in [2Fe-2S] cluster binding. The Mg(2+) site is built by Asp127 and Lys128. Lys128 is subject to N6-carboxylysine. A [2Fe-2S] cluster-binding site is contributed by Cys203. Glu454 contributes to the Mg(2+) binding site. The active-site Proton acceptor is the Ser480.

It belongs to the IlvD/Edd family. Homodimer. The cofactor is [2Fe-2S] cluster. It depends on Mg(2+) as a cofactor.

The catalysed reaction is (2R)-2,3-dihydroxy-3-methylbutanoate = 3-methyl-2-oxobutanoate + H2O. It catalyses the reaction (2R,3R)-2,3-dihydroxy-3-methylpentanoate = (S)-3-methyl-2-oxopentanoate + H2O. It participates in amino-acid biosynthesis; L-isoleucine biosynthesis; L-isoleucine from 2-oxobutanoate: step 3/4. Its pathway is amino-acid biosynthesis; L-valine biosynthesis; L-valine from pyruvate: step 3/4. Functionally, functions in the biosynthesis of branched-chain amino acids. Catalyzes the dehydration of (2R,3R)-2,3-dihydroxy-3-methylpentanoate (2,3-dihydroxy-3-methylvalerate) into 2-oxo-3-methylpentanoate (2-oxo-3-methylvalerate) and of (2R)-2,3-dihydroxy-3-methylbutanoate (2,3-dihydroxyisovalerate) into 2-oxo-3-methylbutanoate (2-oxoisovalerate), the penultimate precursor to L-isoleucine and L-valine, respectively. This is Dihydroxy-acid dehydratase from Mycobacterium leprae (strain TN).